The sequence spans 188 residues: Deoxycytidylate deaminase (188 aa).

The 171-residue stretch at M1–V171 folds into the CMP/dCMP-type deaminase domain. Residues C19, C49, H94, E102, and H104 each contribute to the Zn(2+) site. E106 (proton donor) is an active-site residue. Residues C132 and C135 each coordinate Zn(2+).

It belongs to the cytidine and deoxycytidylate deaminase family. In terms of assembly, homohexamer. Zn(2+) is required as a cofactor.

The catalysed reaction is dCMP + H2O + H(+) = dUMP + NH4(+). Allosteric enzyme whose activity is greatly influenced by the end products of its metabolic pathway, dCTP and dTTP. Supplies the nucleotide substrate for thymidylate synthetase. The sequence is that of Deoxycytidylate deaminase (CD) from Enterobacteria phage T2 (Bacteriophage T2).